Consider the following 389-residue polypeptide: Mitochondrial carrier homolog 1 (389 aa).

A disordered region spans residues 1–78; that stretch reads MGASDPEVAP…PGAPGSGDNA (78 aa). Residues 1 to 93 are Mitochondrial intermembrane-facing; that stretch reads MGASDPEVAP…LFVALGAGVT (93 aa). Residues 15 to 33 show a composition bias toward gly residues; the sequence is GAAGMAGAGAGAGARGGAP. An Omega-N-methylarginine modification is found at Arg-29. 2 Solcar repeats span residues 81–176 and 192–280; these read TEAL…FPPD and KKVV…INAY. A helical transmembrane segment spans residues 94–104; that stretch reads ALSHPLLYVKL. Topologically, residues 105 to 155 are cytoplasmic; it reads LIQVGHEPMPPTLGTNVLGRKVLYLPSFFTYAKYIVQVDGKIGLFRGLSPR. The helical transmembrane segment at 156–176 threads the bilayer; that stretch reads LMSNALSTVTRGSMKKVFPPD. The Mitochondrial intermembrane portion of the chain corresponds to 177–209; it reads EMEQVSNKDDMKTSLKKVVKETSYEMMMQCVSR. A helical transmembrane segment spans residues 210 to 229; the sequence is MLAHPLHVISMRCMVQFVGR. Over 230 to 254 the chain is Cytoplasmic; it reads EAKYSGVLSSIGKIFKEEGLLGFFV. A helical membrane pass occupies residues 255-279; it reads GLIPHLLGDVVFLWGCNLLAHFINA. Topologically, residues 280–322 are mitochondrial intermembrane; that stretch reads YLVDDSVSDTPGGLGNDQNPGSQFSQALAIRSYTKFVMGIAVS. A helical membrane pass occupies residues 323-342; sequence MLTYPFLLVGDLMAVNNCGL. Residues 343-371 are Cytoplasmic-facing; sequence RAGLPPYSPVFKSWIHCWKYLSVQGQLFR. A helical transmembrane segment spans residues 372 to 389; it reads GSSLLFRRVSSGSCFALE.

This sequence belongs to the mitochondrial carrier (TC 2.A.29) family. Interacts with PSEN1.

It localises to the mitochondrion outer membrane. Its function is as follows. Protein insertase that mediates insertion of transmembrane proteins into the mitochondrial outer membrane. Catalyzes insertion of proteins with alpha-helical transmembrane regions, such as signal-anchored, tail-anchored and multi-pass membrane proteins. Does not mediate insertion of beta-barrel transmembrane proteins. May play a role in apoptosis. In Mus musculus (Mouse), this protein is Mitochondrial carrier homolog 1 (Mtch1).